Reading from the N-terminus, the 501-residue chain is Glucose-6-phosphate exchanger SLC37A2 (501 aa).

Residues 19 to 39 (SWFRGLILLLTFLIYACYHMS) form a helical membrane-spanning segment. N-linked (GlcNAc...) asparagine glycans are attached at residues asparagine 53, asparagine 62, and asparagine 68. 5 helical membrane-spanning segments follow: residues 88–108 (GGVD…SGVF), 118–138 (LSAG…GYFW), 145–165 (YFVV…PSVV), 189–209 (SVGN…QWGL), and 210–230 (SFIV…LFLI). Residues 240-262 (PPQHHGEPAENQDNPEDPGNSPC) are disordered. The next 6 membrane-spanning stretches (helical) occupy residues 302 to 322 (LCLL…PLYI), 334 to 354 (GDLS…AGLV), 362 to 382 (ATTC…YNYI), 391 to 411 (IVML…ITTA), 434 to 454 (AIID…AGLI), and 462 to 482 (VFYM…RLVY).

Belongs to the major facilitator superfamily. Organophosphate:Pi antiporter (OPA) (TC 2.A.1.4) family. In terms of tissue distribution, detected in intestine and pancreas. Lower expression is also detected in liver and kidney.

It is found in the endoplasmic reticulum membrane. It catalyses the reaction D-glucose 6-phosphate(in) + phosphate(out) = D-glucose 6-phosphate(out) + phosphate(in). Its activity is regulated as follows. Inhibited by vanadate but not by chlorogenic acid. Functionally, inorganic phosphate and glucose-6-phosphate antiporter. May transport cytoplasmic glucose-6-phosphate into the lumen of the endoplasmic reticulum and translocate inorganic phosphate into the opposite direction. Independent of a lumenal glucose-6-phosphatase. May not play a role in homeostatic regulation of blood glucose levels. This Homo sapiens (Human) protein is Glucose-6-phosphate exchanger SLC37A2.